The sequence spans 235 residues: NAD(P)H-quinone oxidoreductase subunit K (235 aa).

Residues C52, C53, C117, and C148 each coordinate [4Fe-4S] cluster. Residues 216–226 (AGAAVAPQLPV) show a composition bias toward low complexity. Residues 216 to 235 (AGAAVAPQLPVTEKEGRDRA) are disordered.

Belongs to the complex I 20 kDa subunit family. NDH-1 can be composed of about 15 different subunits; different subcomplexes with different compositions have been identified which probably have different functions. [4Fe-4S] cluster is required as a cofactor.

The protein resides in the cellular thylakoid membrane. The enzyme catalyses a plastoquinone + NADH + (n+1) H(+)(in) = a plastoquinol + NAD(+) + n H(+)(out). The catalysed reaction is a plastoquinone + NADPH + (n+1) H(+)(in) = a plastoquinol + NADP(+) + n H(+)(out). Functionally, NDH-1 shuttles electrons from an unknown electron donor, via FMN and iron-sulfur (Fe-S) centers, to quinones in the respiratory and/or the photosynthetic chain. The immediate electron acceptor for the enzyme in this species is believed to be plastoquinone. Couples the redox reaction to proton translocation, and thus conserves the redox energy in a proton gradient. Cyanobacterial NDH-1 also plays a role in inorganic carbon-concentration. The chain is NAD(P)H-quinone oxidoreductase subunit K from Synechococcus elongatus (strain ATCC 33912 / PCC 7942 / FACHB-805) (Anacystis nidulans R2).